Here is a 114-residue protein sequence, read N- to C-terminus: Gonadotropin subunit beta-1 (114 aa).

The signal sequence occupies residues 1-19 (MQLVLMAAVLALAEVGCFG). 6 disulfides stabilise this stretch: Cys20/Cys66, Cys32/Cys80, Cys37/Cys114, Cys43/Cys92, Cys47/Cys94, and Cys97/Cys104. Asn24 is a glycosylation site (N-linked (GlcNAc...) asparagine).

This sequence belongs to the glycoprotein hormones subunit beta family. As to quaternary structure, heterodimer of an alpha and a beta chain.

It localises to the secreted. Its function is as follows. Involved in gametogenesis and steroidogenesis. The protein is Gonadotropin subunit beta-1 (cgba) of Fundulus heteroclitus (Killifish).